We begin with the raw amino-acid sequence, 349 residues long: Methylthioribose-1-phosphate isomerase (349 aa).

Residues 49 to 51 (RGA), R93, and Q201 each bind substrate. D242 (proton donor) is an active-site residue. Position 252-253 (252-253 (NK)) interacts with substrate.

This sequence belongs to the EIF-2B alpha/beta/delta subunits family. MtnA subfamily.

It catalyses the reaction 5-(methylsulfanyl)-alpha-D-ribose 1-phosphate = 5-(methylsulfanyl)-D-ribulose 1-phosphate. It functions in the pathway amino-acid biosynthesis; L-methionine biosynthesis via salvage pathway; L-methionine from S-methyl-5-thio-alpha-D-ribose 1-phosphate: step 1/6. Its function is as follows. Catalyzes the interconversion of methylthioribose-1-phosphate (MTR-1-P) into methylthioribulose-1-phosphate (MTRu-1-P). In Petrotoga mobilis (strain DSM 10674 / SJ95), this protein is Methylthioribose-1-phosphate isomerase.